Reading from the N-terminus, the 75-residue chain is Acyl carrier protein (75 aa).

Residues 1–75 (MIFEKVRDII…DVVEYLSNLE (75 aa)) form the Carrier domain. Residue Ser-35 is modified to O-(pantetheine 4'-phosphoryl)serine.

The protein belongs to the acyl carrier protein (ACP) family. In terms of processing, 4'-phosphopantetheine is transferred from CoA to a specific serine of apo-ACP by AcpS. This modification is essential for activity because fatty acids are bound in thioester linkage to the sulfhydryl of the prosthetic group.

Its subcellular location is the cytoplasm. The protein operates within lipid metabolism; fatty acid biosynthesis. Its function is as follows. Carrier of the growing fatty acid chain in fatty acid biosynthesis. The protein is Acyl carrier protein of Thermoanaerobacter pseudethanolicus (strain ATCC 33223 / 39E) (Clostridium thermohydrosulfuricum).